Here is a 194-residue protein sequence, read N- to C-terminus: Large ribosomal subunit protein eL15 (194 aa).

The disordered stretch occupies residues 164-194 (SAGKKGRGLRNKGIGAEKVRPSIRAHGRRGK). Residues 184-194 (PSIRAHGRRGK) show a composition bias toward basic residues.

This sequence belongs to the eukaryotic ribosomal protein eL15 family.

In Methanocaldococcus jannaschii (strain ATCC 43067 / DSM 2661 / JAL-1 / JCM 10045 / NBRC 100440) (Methanococcus jannaschii), this protein is Large ribosomal subunit protein eL15 (rpl15e).